A 1052-amino-acid polypeptide reads, in one-letter code: 3-hydroxy-3-methylglutaryl coenzyme A reductase mokG (1052 aa).

The next 6 helical transmembrane spans lie at 223–243, 253–273, 279–299, 349–369, 378–398, and 440–460; these read VDMAIIGLGYLALNMTLVSLF, FWLAASVLLSGAFAFVFGLGV, VPVDMLLLSEGIPFLVLTVGF, GWSIVQSYLLEIGALALGAVF, FCFLAAWMVLFDAILLFTFYA, and WKLIMVGGFVLFNVLQLSSFF. The SSD domain maps to 224–403; it reads DMAIIGLGYL…FTFYATILCV (180 aa). Residues 461 to 617 are linker; it reads YRIMGGFMTN…FKANQAESLT (157 aa). A disordered region spans residues 571–594; that stretch reads APKESAAPAPPSSPASVPSAVPVP. Residues 584–594 are compositionally biased toward low complexity; it reads PASVPSAVPVP. Residues 618 to 1044 form a catalytic region; that stretch reads DDELAELCLR…LVNAHMRHNR (427 aa). Glutamate 734 functions as the Charge relay system in the catalytic mechanism. The N-linked (GlcNAc...) asparagine glycan is linked to asparagine 798. Active-site charge relay system residues include lysine 867 and aspartate 943. Histidine 1039 functions as the Proton donor in the catalytic mechanism. Asparagine 1043 carries N-linked (GlcNAc...) asparagine glycosylation.

Belongs to the HMG-CoA reductase family.

It localises to the endoplasmic reticulum membrane. The enzyme catalyses (R)-mevalonate + 2 NADP(+) + CoA = (3S)-3-hydroxy-3-methylglutaryl-CoA + 2 NADPH + 2 H(+). Its pathway is polyketide biosynthesis; lovastatin biosynthesis. In terms of biological role, HMG-CoA reductase; part of the gene cluster that mediates the biosynthesis of monakolin K, also known as lovastatin, and which acts as a potent competitive inhibitor of HMG-CoA reductase. Monakolin K biosynthesis is performed in two stages. The first stage is catalyzed by the nonaketide synthase mokA, which belongs to type I polyketide synthases and catalyzes the iterative nine-step formation of the polyketide. This PKS stage is completed by the action of dehydrogenase mokE, which catalyzes the NADPH-dependent reduction of the unsaturated tetra-, penta- and heptaketide intermediates that arise during the mokA-mediated biosynthesis of the nonaketide chain and leads to dihydromonacolin L. Covalently bound dihydromonacolin L is released from mokA by the mokD esterase. Conversion of dihydromonacolin L into monacolin L and then monacolin J is subsequently performed with the participation of molecular oxygen and P450 monoogygenase mokC. Finally, mokF performs the conversion of monacoline J to monacoline K through the addition of the side-chain diketide moiety (2R)-2-methylbutanoate produced by the diketide synthase mokB. HMG-CoA reductase mokG may act as a down-regulator of monacolin K production. The protein is 3-hydroxy-3-methylglutaryl coenzyme A reductase mokG of Monascus pilosus (Red mold).